Consider the following 78-residue polypeptide: Acyl carrier protein (78 aa).

The region spanning 2–77 is the Carrier domain; sequence STIEERVKKI…AAIDYVNAHQ (76 aa). An O-(pantetheine 4'-phosphoryl)serine modification is found at Ser-37.

The protein belongs to the acyl carrier protein (ACP) family. 4'-phosphopantetheine is transferred from CoA to a specific serine of apo-ACP by AcpS. This modification is essential for activity because fatty acids are bound in thioester linkage to the sulfhydryl of the prosthetic group.

It is found in the cytoplasm. Its pathway is lipid metabolism; fatty acid biosynthesis. Its function is as follows. Carrier of the growing fatty acid chain in fatty acid biosynthesis. This chain is Acyl carrier protein, found in Pseudomonas entomophila (strain L48).